The primary structure comprises 1006 residues: Transcription factor tau subunit sfc4 (1006 aa).

Residues glycine 64–aspartate 91 are disordered. Acidic residues predominate over residues tryptophan 66–serine 80. TPR repeat units follow at residues glutamine 133–valine 166, histidine 205–asparagine 238, alanine 277–tyrosine 310, histidine 396–tyrosine 429, tryptophan 431–glutamine 464, and isoleucine 466–asparagine 499. Positions leucine 506–leucine 554 form a coiled coil. TPR repeat units follow at residues proline 841–cysteine 874 and glutamine 924–serine 957.

Component of the TFIIIC complex including sfc1, sfc3, sfc4, sfc6 and sfc7. The subunits are organized in two globular domains, tauA and tauB, connected by a proteolysis-sensitive and flexible linker. Interacts with sfc1, sfc3 and sfc6. Phosphorylated.

The protein resides in the nucleus. In terms of biological role, TFIIIC mediates tRNA and 5S RNA gene activation by binding to intragenic promoter elements. Upstream of the transcription start site, TFIIIC assembles the initiation complex TFIIIB-TFIIIC-tDNA, which is sufficient for RNA polymerase III recruitment and function. Part of the tauA domain of TFIIIC that binds boxA DNA promoter sites of tRNA and similar genes. Sfc4 is the TFIIIB assembling subunit of TFIIIC. The sequence is that of Transcription factor tau subunit sfc4 from Schizosaccharomyces pombe (strain 972 / ATCC 24843) (Fission yeast).